We begin with the raw amino-acid sequence, 400 residues long: Selection and upkeep of intraepithelial T-cells protein 2 (400 aa).

Residues 1–21 (MGATGVLLCVVLHFLQMVTQS) form the signal peptide. The Extracellular portion of the chain corresponds to 22 to 240 (SEKFTVTGLQ…LSGELFSWKR (219 aa)). Residues 23-133 (EKFTVTGLQR…VGEFYEEHIT (111 aa)) form the Ig-like V-type domain. 2 cysteine pairs are disulfide-bonded: Cys-46–Cys-120 and Cys-160–Cys-214. Positions 139–225 (ATSSVMYILM…LQNLLTHQEE (87 aa)) constitute an Ig-like C1-type domain. N-linked (GlcNAc...) asparagine glycosylation is present at Asn-197. Residues 241–261 (VWIMILTTIGFMMIAFCMTYC) traverse the membrane as a helical segment. At 262–280 (VQQHLLYGTFSKGKCHWLK) the chain is on the cytoplasmic side. Residues 281 to 301 (STMIFMFSVIAVTGVMLILHL) form a helical membrane-spanning segment. The Extracellular portion of the chain corresponds to 302–321 (KQRVPVSDQHFELDTLWLED). A helical membrane pass occupies residues 322-342 (ISVILCVLIVFIIKLISFIYF). At 343–400 (RLEGDHQGWSLPPYLSATPTAAICRLAVPEYSRGHLQLDSEDDLAGMGPSPFFITPCF) the chain is on the cytoplasmic side.

This sequence belongs to the SKINT family. Expressed in skin, thymus and mammary gland.

Its subcellular location is the membrane. May act by engaging a cell surface molecule on immature T-cells in the embryonic thymus. This chain is Selection and upkeep of intraepithelial T-cells protein 2 (Skint2), found in Mus musculus (Mouse).